A 162-amino-acid polypeptide reads, in one-letter code: UPF0460 protein y4xD (162 aa).

It belongs to the UPF0460 family.

The sequence is that of UPF0460 protein y4xD from Sinorhizobium fredii (strain NBRC 101917 / NGR234).